The sequence spans 56 residues: Envelope protein H3 (56 aa).

It belongs to the orthopoxvirus OPG108 family. In terms of processing, does not contain disulfide bonds.

Its subcellular location is the virion membrane. Envelope protein that binds to heparan sulfate on the cell surface and might provide virion attachment to target cell. The polypeptide is Envelope protein H3 (OPG108) (Vaccinia virus (strain L-IVP) (VACV)).